We begin with the raw amino-acid sequence, 58 residues long: Sperm protamine P1 (58 aa).

The disordered stretch occupies residues 1 to 58 (MARYRRRSRSRSRSRYGRRRRRSRSRRRRSRRRRRRRGRRGRGYHRRSPHRRRRRRRR).

Belongs to the protamine P1 family. Testis.

The protein resides in the nucleus. The protein localises to the chromosome. Functionally, protamines substitute for histones in the chromatin of sperm during the haploid phase of spermatogenesis. They compact sperm DNA into a highly condensed, stable and inactive complex. The chain is Sperm protamine P1 (PRM1) from Monodelphis domestica (Gray short-tailed opossum).